A 103-amino-acid polypeptide reads, in one-letter code: Colicin-V (103 aa).

Positions 1 to 15 (MRTLTLNELDSVSGG) are excised as a propeptide. Cysteine 91 and cysteine 102 form a disulfide bridge.

The protein resides in the secreted. Functionally, colicin V kills sensitive cells by disrupting the membrane potential. In terms of biological role, colicins are polypeptide toxins produced by, and active against E.coli and closely related bacteria. This is Colicin-V (cvaC) from Escherichia coli.